The chain runs to 476 residues: Siroheme synthase (476 aa).

The tract at residues 1-203 is precorrin-2 dehydrogenase /sirohydrochlorin ferrochelatase; the sequence is MNYFPVFADL…RQIEAAKKEL (203 aa). Residues 22–23 and 43–44 contribute to the NAD(+) site; these read TI and QK. Serine 128 carries the post-translational modification Phosphoserine. The segment at 214 to 476 is uroporphyrinogen-III C-methyltransferase; the sequence is GSVSLVGAGP…LDSLRIERVA (263 aa). Proline 223 contributes to the S-adenosyl-L-methionine binding site. Aspartate 246 acts as the Proton acceptor in catalysis. The active-site Proton donor is the lysine 268. S-adenosyl-L-methionine-binding positions include 299–301, valine 304, 329–330, methionine 381, and glycine 410; these read GGD and TA.

It in the N-terminal section; belongs to the precorrin-2 dehydrogenase / sirohydrochlorin ferrochelatase family. The protein in the C-terminal section; belongs to the precorrin methyltransferase family.

The catalysed reaction is uroporphyrinogen III + 2 S-adenosyl-L-methionine = precorrin-2 + 2 S-adenosyl-L-homocysteine + H(+). It carries out the reaction precorrin-2 + NAD(+) = sirohydrochlorin + NADH + 2 H(+). The enzyme catalyses siroheme + 2 H(+) = sirohydrochlorin + Fe(2+). Its pathway is cofactor biosynthesis; adenosylcobalamin biosynthesis; precorrin-2 from uroporphyrinogen III: step 1/1. It participates in cofactor biosynthesis; adenosylcobalamin biosynthesis; sirohydrochlorin from precorrin-2: step 1/1. It functions in the pathway porphyrin-containing compound metabolism; siroheme biosynthesis; precorrin-2 from uroporphyrinogen III: step 1/1. The protein operates within porphyrin-containing compound metabolism; siroheme biosynthesis; siroheme from sirohydrochlorin: step 1/1. Its pathway is porphyrin-containing compound metabolism; siroheme biosynthesis; sirohydrochlorin from precorrin-2: step 1/1. Multifunctional enzyme that catalyzes the SAM-dependent methylations of uroporphyrinogen III at position C-2 and C-7 to form precorrin-2 via precorrin-1. Then it catalyzes the NAD-dependent ring dehydrogenation of precorrin-2 to yield sirohydrochlorin. Finally, it catalyzes the ferrochelation of sirohydrochlorin to yield siroheme. The sequence is that of Siroheme synthase from Mannheimia succiniciproducens (strain KCTC 0769BP / MBEL55E).